The sequence spans 154 residues: MAARLCCQLDPARDVLCLRPVGAESRGRPFSGSLGTLSSPSPSAVPTDHGAHLSLRGLPVCAFSSAGPCALRFTSARRMETTVNAHQILPKVLHKRTLGLSAMSTTDLEAYFKDCLFKDWEELGEEIRLKVFVLGGCRHKLVCAPAPCNFFTSA.

Residues 68–117 (PCALRFTSARRMETTVNAHQILPKVLHKRTLGLSAMSTTDLEAYFKDCLF) form a mitochondrial targeting sequence region.

Belongs to the orthohepadnavirus protein X family. As to quaternary structure, may form homodimer. May interact with host CEBPA, CFLAR, CREB1, DDB1, E4F1, HBXIP, HSPD1/HSP60, NFKBIA, POLR2E and SMAD4. Interacts with host SMC5-SMC6 complex and induces its degradation. Interacts with host TRPC4AP; leading to prevent ubiquitination of TRPC4AP. Interacts with host PLSCR1; this interaction promotes ubiquitination and degradation of HBx and impairs HBx-mediated cell proliferation. A fraction may be phosphorylated in insect cells and HepG2 cells, a human hepatoblastoma cell line. Phosphorylated in vitro by host protein kinase C or mitogen-activated protein kinase. N-acetylated in insect cells.

It localises to the host cytoplasm. Its subcellular location is the host nucleus. The protein resides in the host mitochondrion. Multifunctional protein that plays a role in silencing host antiviral defenses and promoting viral transcription. Does not seem to be essential for HBV infection. May be directly involved in development of cirrhosis and liver cancer (hepatocellular carcinoma). Most of cytosolic activities involve modulation of cytosolic calcium. The effect on apoptosis is controversial depending on the cell types in which the studies have been conducted. May induce apoptosis by localizing in mitochondria and causing loss of mitochondrial membrane potential. May also modulate apoptosis by binding host CFLAR, a key regulator of the death-inducing signaling complex (DISC). Promotes viral transcription by using the host E3 ubiquitin ligase DDB1 to target the SMC5-SMC6 complex to proteasomal degradation. This host complex would otherwise bind to viral episomal DNA, and prevents its transcription. Moderately stimulates transcription of many different viral and cellular transcription elements. Promoters and enhancers stimulated by HBx contain DNA binding sites for NF-kappa-B, AP-1, AP-2, c-EBP, ATF/CREB, or the calcium-activated factor NF-AT. The sequence is that of Protein X from Hepatitis B virus genotype D subtype ayw (isolate France/Tiollais/1979) (HBV-D).